The primary structure comprises 310 residues: tRNA-cytidine(32) 2-sulfurtransferase (310 aa).

The short motif at 47–52 (SGGKDS) is the PP-loop motif element. [4Fe-4S] cluster contacts are provided by C122, C125, and C213.

The protein belongs to the TtcA family. Homodimer. Mg(2+) is required as a cofactor. It depends on [4Fe-4S] cluster as a cofactor.

It is found in the cytoplasm. The catalysed reaction is cytidine(32) in tRNA + S-sulfanyl-L-cysteinyl-[cysteine desulfurase] + AH2 + ATP = 2-thiocytidine(32) in tRNA + L-cysteinyl-[cysteine desulfurase] + A + AMP + diphosphate + H(+). It functions in the pathway tRNA modification. Functionally, catalyzes the ATP-dependent 2-thiolation of cytidine in position 32 of tRNA, to form 2-thiocytidine (s(2)C32). The sulfur atoms are provided by the cysteine/cysteine desulfurase (IscS) system. This chain is tRNA-cytidine(32) 2-sulfurtransferase, found in Serratia proteamaculans (strain 568).